The primary structure comprises 141 residues: Ribosomal RNA large subunit methyltransferase H (141 aa).

Glycine 88 contacts S-adenosyl-L-methionine.

This sequence belongs to the RNA methyltransferase RlmH family. As to quaternary structure, homodimer.

Its subcellular location is the cytoplasm. It carries out the reaction pseudouridine(1915) in 23S rRNA + S-adenosyl-L-methionine = N(3)-methylpseudouridine(1915) in 23S rRNA + S-adenosyl-L-homocysteine + H(+). Functionally, specifically methylates the pseudouridine at position 1915 (m3Psi1915) in 23S rRNA. This Novosphingobium aromaticivorans (strain ATCC 700278 / DSM 12444 / CCUG 56034 / CIP 105152 / NBRC 16084 / F199) protein is Ribosomal RNA large subunit methyltransferase H.